The following is a 394-amino-acid chain: S-adenosylmethionine synthase 2 (394 aa).

Glutamate 11 serves as a coordination point for Mg(2+). An ATP-binding site is contributed by histidine 17. Glutamate 45 provides a ligand contact to K(+). 2 residues coordinate L-methionine: glutamate 58 and glutamine 101. Residues 169-171, 237-240, aspartate 248, 254-255, alanine 271, lysine 275, and lysine 279 contribute to the ATP site; these read DGK, SGRF, and RK. Aspartate 248 lines the L-methionine pocket. Lysine 279 contacts L-methionine.

The protein belongs to the AdoMet synthase family. Homotetramer. Mn(2+) is required as a cofactor. Requires Mg(2+) as cofactor. The cofactor is Co(2+). K(+) serves as cofactor.

The protein resides in the cytoplasm. It catalyses the reaction L-methionine + ATP + H2O = S-adenosyl-L-methionine + phosphate + diphosphate. It functions in the pathway amino-acid biosynthesis; S-adenosyl-L-methionine biosynthesis; S-adenosyl-L-methionine from L-methionine: step 1/1. Catalyzes the formation of S-adenosylmethionine from methionine and ATP. The reaction comprises two steps that are both catalyzed by the same enzyme: formation of S-adenosylmethionine (AdoMet) and triphosphate, and subsequent hydrolysis of the triphosphate. The polypeptide is S-adenosylmethionine synthase 2 (SAM2) (Hordeum vulgare (Barley)).